The primary structure comprises 95 residues: Aspartyl/glutamyl-tRNA(Asn/Gln) amidotransferase subunit C (95 aa).

The protein belongs to the GatC family. In terms of assembly, heterotrimer of A, B and C subunits.

The catalysed reaction is L-glutamyl-tRNA(Gln) + L-glutamine + ATP + H2O = L-glutaminyl-tRNA(Gln) + L-glutamate + ADP + phosphate + H(+). The enzyme catalyses L-aspartyl-tRNA(Asn) + L-glutamine + ATP + H2O = L-asparaginyl-tRNA(Asn) + L-glutamate + ADP + phosphate + 2 H(+). Functionally, allows the formation of correctly charged Asn-tRNA(Asn) or Gln-tRNA(Gln) through the transamidation of misacylated Asp-tRNA(Asn) or Glu-tRNA(Gln) in organisms which lack either or both of asparaginyl-tRNA or glutaminyl-tRNA synthetases. The reaction takes place in the presence of glutamine and ATP through an activated phospho-Asp-tRNA(Asn) or phospho-Glu-tRNA(Gln). This Bartonella henselae (strain ATCC 49882 / DSM 28221 / CCUG 30454 / Houston 1) (Rochalimaea henselae) protein is Aspartyl/glutamyl-tRNA(Asn/Gln) amidotransferase subunit C.